The primary structure comprises 115 residues: Large ribosomal subunit protein bL19 (115 aa).

This sequence belongs to the bacterial ribosomal protein bL19 family.

This protein is located at the 30S-50S ribosomal subunit interface and may play a role in the structure and function of the aminoacyl-tRNA binding site. This chain is Large ribosomal subunit protein bL19, found in Streptococcus mutans serotype c (strain ATCC 700610 / UA159).